A 486-amino-acid polypeptide reads, in one-letter code: NADH-quinone oxidoreductase subunit N 1 (486 aa).

Helical transmembrane passes span 15-35 (FLPE…DPVI), 46-66 (ISLI…GIAG), 72-92 (MLMV…VGIL), 111-128 (YHAL…MAAS), 131-151 (LIMV…LAGY), 166-186 (FLLG…IYGL), 208-228 (FVGI…SAAP), 241-261 (PTPV…AIFL), 276-296 (QPLV…AAIL), 303-323 (MLAY…TAHS), 331-351 (MFYL…VSVL), 375-395 (AAMF…GGFF), 410-432 (IWLT…RILV), and 455-475 (FALI…GWVL).

Belongs to the complex I subunit 2 family. NDH-1 is composed of 14 different subunits. Subunits NuoA, H, J, K, L, M, N constitute the membrane sector of the complex.

It localises to the cell inner membrane. The catalysed reaction is a quinone + NADH + 5 H(+)(in) = a quinol + NAD(+) + 4 H(+)(out). Its function is as follows. NDH-1 shuttles electrons from NADH, via FMN and iron-sulfur (Fe-S) centers, to quinones in the respiratory chain. The immediate electron acceptor for the enzyme in this species is believed to be ubiquinone. Couples the redox reaction to proton translocation (for every two electrons transferred, four hydrogen ions are translocated across the cytoplasmic membrane), and thus conserves the redox energy in a proton gradient. This chain is NADH-quinone oxidoreductase subunit N 1, found in Solibacter usitatus (strain Ellin6076).